Reading from the N-terminus, the 395-residue chain is Putative nickel insertion protein (395 aa).

Belongs to the LarC family.

The polypeptide is Putative nickel insertion protein (Archaeoglobus fulgidus (strain ATCC 49558 / DSM 4304 / JCM 9628 / NBRC 100126 / VC-16)).